The following is a 344-amino-acid chain: Follistatin (344 aa).

The first 29 residues, 1–29 (MVRARHQPGGLCLLLLLLCQFMEDRSAQA), serve as a signal peptide directing secretion. The TB domain occupies 30–103 (GNCWLRQAKN…TCENVDCGPG (74 aa)). Cystine bridges form between Cys-32–Cys-55, Cys-42–Cys-88, Cys-56–Cys-91, Cys-95–Cys-106, Cys-100–Cys-116, Cys-118–Cys-150, Cys-122–Cys-143, Cys-132–Cys-164, Cys-168–Cys-179, Cys-173–Cys-189, Cys-192–Cys-225, Cys-196–Cys-218, Cys-207–Cys-239, Cys-245–Cys-256, Cys-250–Cys-267, Cys-270–Cys-302, Cys-274–Cys-295, and Cys-284–Cys-316. In terms of domain architecture, Follistatin-like 1 spans 94-117 (TCENVDCGPGKKCRMNKKNKPRCV). Residues 112 to 166 (NKPRCVCAPDCSNITWKGPVCGLDGKTYRNECALLKARCKEQPELEVQYQGRCKK) enclose the Kazal-like 1 domain. Asn-124 carries an N-linked (GlcNAc...) asparagine glycan. A Follistatin-like 2 domain is found at 167–190 (TCRDVFCPGSSTCVVDQTNNAYCV). Residues 186 to 241 (NAYCVTCNRICPEPASSEQYLCGNDGVTYSSACHLRKATCLLGRSIGLAYEGKCIK) form the Kazal-like 2 domain. Residues 244–268 (SCEDIQCTGGKKCLWDFKVGRGRCS) form the Follistatin-like 3 domain. The 55-residue stretch at 264–318 (RGRCSLCDELCPDSKSDEPVCASDNATYASECAMKEAACSSGVLLEVKHSGSCNS) folds into the Kazal-like 3 domain. N-linked (GlcNAc...) asparagine glycosylation is present at Asn-288. The interval 314-344 (GSCNSISEDTEEEEEDEDQDYSFPISSILEW) is disordered. A compositionally biased stretch (acidic residues) spans 321–333 (EDTEEEEEDEDQD).

Interacts with GDF11. Interacts with activin A/INHBA. Interacts with MYOSTATIN/MSTN. In terms of tissue distribution, isoform 1 is the predominant isoform in serum but is undetectable in follicular fluid. In the embryo, strong expression is seen in the palatal epithelia, including the medial edge epithelial and midline epithelial seam of the palatal shelves. Less pronounced expression is also seen throughout the palatal shelf and tongue mesenchyme.

Its subcellular location is the secreted. The protein localises to the nucleus. It localises to the nucleolus. Multifunctional regulatory protein whose primary function is to antagonize members of the transforming growth factor beta (TGF-beta) superfamily including activin, myostatin, GDF11 or bone morphogenetic proteins (BMPs). Mechanistically, binds to these ligands in the extracellular space, blocking their type II receptor-binding site to inhibit downstream signaling. Plays an essential role in muscle fiber formation and growth both by preventing the repressive effects of myostatin and through SMAD3/AKT/mTOR signaling independently of myostatin. Also promotes neural differentiation by antagonizing the action BMP4. Acts as a specific inhibitor of the biosynthesis and secretion of pituitary follicle stimulating hormone (FSH) by sequestering activin A/INHBA. On the other hand, translocates into the nucleus where it down-regulates rRNA synthesis and ribosome biogenesis to maintain cellular energy homeostasis by binding to rDNA. The chain is Follistatin from Homo sapiens (Human).